We begin with the raw amino-acid sequence, 312 residues long: tRNA uridine(34) hydroxylase (312 aa).

Positions 130–225 constitute a Rhodanese domain; that stretch reads RGDEVVFFDG…YGEKFGNQGL (96 aa). The Cysteine persulfide intermediate role is filled by C185.

This sequence belongs to the TrhO family.

It carries out the reaction uridine(34) in tRNA + AH2 + O2 = 5-hydroxyuridine(34) in tRNA + A + H2O. In terms of biological role, catalyzes oxygen-dependent 5-hydroxyuridine (ho5U) modification at position 34 in tRNAs. This chain is tRNA uridine(34) hydroxylase, found in Corynebacterium efficiens (strain DSM 44549 / YS-314 / AJ 12310 / JCM 11189 / NBRC 100395).